The chain runs to 363 residues: NAD(P)H-quinone oxidoreductase subunit 1, chloroplastic (363 aa).

Transmembrane regions (helical) follow at residues 27–47, 98–118, 127–147, 248–268, 300–320, and 336–356; these read IWLLVPIFTPVSGITIGVLVI, FSIGPSIAIISILLSYSVIPF, LSIGVFLWIAISSIAPIGLLM, YSGIKFGLFYVASYLNLLVSS, VFGTTIGIFITLAKAYLFLFI, and LLNLGWKFLLPISLGNLLLTT.

The protein belongs to the complex I subunit 1 family. As to quaternary structure, NDH is composed of at least 16 different subunits, 5 of which are encoded in the nucleus.

The protein resides in the plastid. Its subcellular location is the chloroplast thylakoid membrane. It catalyses the reaction a plastoquinone + NADH + (n+1) H(+)(in) = a plastoquinol + NAD(+) + n H(+)(out). It carries out the reaction a plastoquinone + NADPH + (n+1) H(+)(in) = a plastoquinol + NADP(+) + n H(+)(out). In terms of biological role, NDH shuttles electrons from NAD(P)H:plastoquinone, via FMN and iron-sulfur (Fe-S) centers, to quinones in the photosynthetic chain and possibly in a chloroplast respiratory chain. The immediate electron acceptor for the enzyme in this species is believed to be plastoquinone. Couples the redox reaction to proton translocation, and thus conserves the redox energy in a proton gradient. The polypeptide is NAD(P)H-quinone oxidoreductase subunit 1, chloroplastic (Platanus occidentalis (Sycamore)).